The primary structure comprises 477 residues: Ribulose bisphosphate carboxylase large chain (477 aa).

A propeptide spanning residues 1–2 is cleaved from the precursor; sequence MS. Residue P3 is modified to N-acetylproline. N6,N6,N6-trimethyllysine is present on K14. Residues N123 and T173 each coordinate substrate. The active-site Proton acceptor is the K175. Residue K177 participates in substrate binding. 3 residues coordinate Mg(2+): K201, D203, and E204. An N6-carboxylysine modification is found at K201. The active-site Proton acceptor is the H294. Substrate contacts are provided by R295, H327, and S379.

The protein belongs to the RuBisCO large chain family. Type I subfamily. Heterohexadecamer of 8 large chains and 8 small chains; disulfide-linked. The disulfide link is formed within the large subunit homodimers. Mg(2+) serves as cofactor. Post-translationally, the disulfide bond which can form in the large chain dimeric partners within the hexadecamer appears to be associated with oxidative stress and protein turnover.

Its subcellular location is the plastid. The protein localises to the chloroplast. It catalyses the reaction 2 (2R)-3-phosphoglycerate + 2 H(+) = D-ribulose 1,5-bisphosphate + CO2 + H2O. The catalysed reaction is D-ribulose 1,5-bisphosphate + O2 = 2-phosphoglycolate + (2R)-3-phosphoglycerate + 2 H(+). In terms of biological role, ruBisCO catalyzes two reactions: the carboxylation of D-ribulose 1,5-bisphosphate, the primary event in carbon dioxide fixation, as well as the oxidative fragmentation of the pentose substrate in the photorespiration process. Both reactions occur simultaneously and in competition at the same active site. This Persea americana (Avocado) protein is Ribulose bisphosphate carboxylase large chain.